The sequence spans 471 residues: Glutamate--tRNA ligase (471 aa).

The 'HIGH' region signature appears at 9–19; the sequence is PSPTGYLHVGG. Zn(2+) is bound by residues Cys-98, Cys-100, Cys-125, and Asp-127. Positions 237–241 match the 'KMSKS' region motif; that stretch reads KLSKR. ATP is bound at residue Lys-240.

Belongs to the class-I aminoacyl-tRNA synthetase family. Glutamate--tRNA ligase type 1 subfamily. In terms of assembly, monomer. Zn(2+) serves as cofactor.

It is found in the cytoplasm. It carries out the reaction tRNA(Glu) + L-glutamate + ATP = L-glutamyl-tRNA(Glu) + AMP + diphosphate. Catalyzes the attachment of glutamate to tRNA(Glu) in a two-step reaction: glutamate is first activated by ATP to form Glu-AMP and then transferred to the acceptor end of tRNA(Glu). The polypeptide is Glutamate--tRNA ligase (Yersinia pestis).